A 425-amino-acid polypeptide reads, in one-letter code: Orexin/Hypocretin receptor type 1 (425 aa).

Topologically, residues 1–46 (MEPSATPGPQMGVPTGVGDPSLVPPDYEEEFLSYLWRDYLYPKQYE) are extracellular. The required for response to orexin-A stretch occupies residues 26 to 41 (DYEEEFLSYLWRDYLY). A helical membrane pass occupies residues 47–67 (WVLIAAYVAVFLVALVGNTLV). Topologically, residues 68–82 (CLAVWRNHHMRTVTN) are cytoplasmic. The helical transmembrane segment at 83 to 105 (YFIVNLSLADVLVTAICLPASLL) threads the bilayer. At 106–119 (VDITESWLFGHALC) the chain is on the extracellular side. Cysteines 119 and 202 form a disulfide. The chain crosses the membrane as a helical span at residues 120 to 140 (KVIPYLQAVSVSVAVLTLSFI). Residues 141–160 (ALDRWYAIYHPLLFKSTARR) are Cytoplasmic-facing. A helical transmembrane segment spans residues 161–182 (ARGSILGIWAVSPAVMVPQAAV). Topologically, residues 183–213 (MECSSVLPELANRTRLFSVCDERWADDLYPK) are extracellular. A helical transmembrane segment spans residues 214–235 (IYHSCFFIVTYLAPLGLMAMAY). Topologically, residues 236 to 298 (FQIFRKLWGR…QMRARRKTAK (63 aa)) are cytoplasmic. The helical transmembrane segment at 299-321 (MLMVVLLVFALCYLPISVLNVLK) threads the bilayer. The Extracellular segment spans residues 322–336 (RVFGMFRQTSDREAV). The helical transmembrane segment at 337–360 (YACFTFSHWLVYANSAANPIIYNF) threads the bilayer. Residues 361–425 (LSGKFREQFK…VLTSVTTVLP (65 aa)) are Cytoplasmic-facing.

Belongs to the G-protein coupled receptor 1 family.

The protein localises to the cell membrane. In terms of biological role, moderately selective excitatory receptor for orexin-A and, with a lower affinity, for orexin-B neuropeptide. Triggers an increase in cytoplasmic Ca(2+) levels in response to orexin-A binding. This chain is Orexin/Hypocretin receptor type 1, found in Sus scrofa (Pig).